The sequence spans 1216 residues: ATP-dependent helicase/nuclease subunit A (1216 aa).

The region spanning 26 to 488 (QKKTAEQIEA…ILLKENFRSS (463 aa)) is the UvrD-like helicase ATP-binding domain. ATP is bound at residue 47-54 (ASAGSGKT). A UvrD-like helicase C-terminal domain is found at 515–802 (KHQLVFANTK…ELMTIHKSKG (288 aa)).

Belongs to the helicase family. AddA subfamily. As to quaternary structure, heterodimer of AddA and AddB/RexB. Mg(2+) is required as a cofactor.

The catalysed reaction is Couples ATP hydrolysis with the unwinding of duplex DNA by translocating in the 3'-5' direction.. The enzyme catalyses ATP + H2O = ADP + phosphate + H(+). The heterodimer acts as both an ATP-dependent DNA helicase and an ATP-dependent, dual-direction single-stranded exonuclease. Recognizes the chi site generating a DNA molecule suitable for the initiation of homologous recombination. The AddA nuclease domain is required for chi fragment generation; this subunit has the helicase and 3' -&gt; 5' nuclease activities. The chain is ATP-dependent helicase/nuclease subunit A from Streptococcus pneumoniae (strain CGSP14).